Reading from the N-terminus, the 224-residue chain is UPF0758 protein Tbd_2588 (224 aa).

The region spanning 102–224 (ALSSPAAVRD…ALSFAEAGHL (123 aa)) is the MPN domain. Zn(2+) is bound by residues H173, H175, and D186. The JAMM motif motif lies at 173 to 186 (HNHPSGVNEPSQAD).

It belongs to the UPF0758 family.

This Thiobacillus denitrificans (strain ATCC 25259 / T1) protein is UPF0758 protein Tbd_2588.